Reading from the N-terminus, the 731-residue chain is 1,4-alpha-glucan branching enzyme GlgB (731 aa).

The Nucleophile role is filled by Asp412. Residue Glu465 is the Proton donor of the active site.

Belongs to the glycosyl hydrolase 13 family. GlgB subfamily. In terms of assembly, monomer.

It catalyses the reaction Transfers a segment of a (1-&gt;4)-alpha-D-glucan chain to a primary hydroxy group in a similar glucan chain.. Its pathway is glycan biosynthesis; glycogen biosynthesis. Its function is as follows. Catalyzes the formation of the alpha-1,6-glucosidic linkages in glycogen by scission of a 1,4-alpha-linked oligosaccharide from growing alpha-1,4-glucan chains and the subsequent attachment of the oligosaccharide to the alpha-1,6 position. This chain is 1,4-alpha-glucan branching enzyme GlgB, found in Bordetella pertussis (strain Tohama I / ATCC BAA-589 / NCTC 13251).